The sequence spans 267 residues: Transcription factor LBX1 (267 aa).

Basic and acidic residues predominate over residues 1-21 (MTSKDEAKSSASSVEERRRNA). A disordered region spans residues 1–36 (MTSKDEAKSSASSVEERRRNALDLLPPPANSNKPLT). The segment at residues 127 to 186 (RRKSRTAFTNHQIYELEKRFLYQKYLSPADRDQIAQQLGLTNAQVITWFQNRRAKLKRDL) is a DNA-binding region (homeobox). Residues 211-267 (SELEESGSERGNSRSRSPQLGLTSNHMPLSPSXPLTDQHASKECSEDEEDVEIDVDD) form a disordered region. Residues 228–237 (PQLGLTSNHM) show a composition bias toward polar residues. Residues 255 to 267 (SEDEEDVEIDVDD) are compositionally biased toward acidic residues.

Expressed in all myoblasts that will populate body wall muscles as well as in a group of cells the migrate into the head.

The protein localises to the nucleus. Its function is as follows. Transcription factor that controls hypaxial muscle development by down-regulating myod1 and cdkn1b/p27, thereby allowing myoblasts to proliferate before the onset of terminal differentiation. The protein is Transcription factor LBX1 of Xenopus laevis (African clawed frog).